Here is a 181-residue protein sequence, read N- to C-terminus: dTDP-4-dehydrorhamnose 3,5-epimerase (181 aa).

Residues Arg23, Glu28, 47–49, and Arg59 contribute to the substrate site; that span reads QDN. The Proton acceptor role is filled by His62. Positions 72 and 119 each coordinate substrate. Tyr132 (proton donor) is an active-site residue. Substrate contacts are provided by Glu143 and Lys167.

The protein belongs to the dTDP-4-dehydrorhamnose 3,5-epimerase family. Homodimer.

The enzyme catalyses dTDP-4-dehydro-6-deoxy-alpha-D-glucose = dTDP-4-dehydro-beta-L-rhamnose. The protein operates within carbohydrate biosynthesis; dTDP-L-rhamnose biosynthesis. Its pathway is bacterial outer membrane biogenesis; LPS O-antigen biosynthesis. Catalyzes the epimerization of the C3' and C5'positions of dTDP-6-deoxy-D-xylo-4-hexulose, forming dTDP-6-deoxy-L-lyxo-4-hexulose. This Shigella flexneri protein is dTDP-4-dehydrorhamnose 3,5-epimerase (rfbC).